The sequence spans 639 residues: Threonine--tRNA ligase (639 aa).

The TGS domain maps to 1 to 61 (MINITLKDGK…KEDSELEILT (61 aa)). The tract at residues 242 to 532 (DHRKLGKELD…LIEHFAGAFP (291 aa)) is catalytic. Zn(2+) contacts are provided by Cys-333, His-384, and His-509.

The protein belongs to the class-II aminoacyl-tRNA synthetase family. Homodimer. It depends on Zn(2+) as a cofactor.

It is found in the cytoplasm. It catalyses the reaction tRNA(Thr) + L-threonine + ATP = L-threonyl-tRNA(Thr) + AMP + diphosphate + H(+). In terms of biological role, catalyzes the attachment of threonine to tRNA(Thr) in a two-step reaction: L-threonine is first activated by ATP to form Thr-AMP and then transferred to the acceptor end of tRNA(Thr). Also edits incorrectly charged L-seryl-tRNA(Thr). The sequence is that of Threonine--tRNA ligase from Clostridium tetani (strain Massachusetts / E88).